The primary structure comprises 339 residues: 4-hydroxythreonine-4-phosphate dehydrogenase (339 aa).

His141 and Thr142 together coordinate substrate. The a divalent metal cation site is built by His171, His215, and His270. 3 residues coordinate substrate: Lys278, Asn287, and Arg296.

Belongs to the PdxA family. Homodimer. Zn(2+) is required as a cofactor. It depends on Mg(2+) as a cofactor. The cofactor is Co(2+).

It localises to the cytoplasm. It carries out the reaction 4-(phosphooxy)-L-threonine + NAD(+) = 3-amino-2-oxopropyl phosphate + CO2 + NADH. It participates in cofactor biosynthesis; pyridoxine 5'-phosphate biosynthesis; pyridoxine 5'-phosphate from D-erythrose 4-phosphate: step 4/5. Its function is as follows. Catalyzes the NAD(P)-dependent oxidation of 4-(phosphooxy)-L-threonine (HTP) into 2-amino-3-oxo-4-(phosphooxy)butyric acid which spontaneously decarboxylates to form 3-amino-2-oxopropyl phosphate (AHAP). The sequence is that of 4-hydroxythreonine-4-phosphate dehydrogenase from Geobacter metallireducens (strain ATCC 53774 / DSM 7210 / GS-15).